The sequence spans 530 residues: Chaperone Ric-8A (530 aa).

Ser-435 bears the Phosphoserine mark. Phosphothreonine occurs at positions 440 and 442. Phosphoserine is present on residues Ser-501, Ser-522, Ser-523, and Ser-527.

The protein belongs to the synembryn family. Interacts with GDP-bound G alpha proteins GNAI1, GNAO1 and GNAQ, and with GNA13 with lower affinity. Does not interact with G-alpha proteins when they are in complex with subunits beta and gamma. Interacts (via C-terminus) with RGS14; the interaction stimulates the dissociation of the complex between RGS14 and the active GTP-bound form of GNAI1. Interacts with NCS1; interaction is favored in the absence of Ca(2+) and myristoylation of NCS1 is not required. As to expression, expressed in neurons and neurites of the CA1 and CA2 subregions of the hippocampus (at protein level). In adult brain, it is expressed in the neocortex, hippocampus and cerebellum as well as in the pineal gland and ependymal layer.

The protein localises to the cytoplasm. It localises to the cell cortex. Chaperone that specifically binds and folds nascent G alpha proteins prior to G protein heterotrimer formation, promoting their stability and activity: folds GNAI1, GNAO1, GNA13 and GNAQ. Does not fold G(s) G-alpha proteins GNAS nor GNAL. Also acts as a guanine nucleotide exchange factor (GEF) for G alpha proteins by stimulating exchange of bound GDP for free GTP. Involved in regulation of microtubule pulling forces during mitotic movement of chromosomes by stimulating G(i)-alpha protein (GNAI1), possibly leading to release G(i)-alpha-GTP and NuMA proteins from the NuMA-GPSM2-G(i)-alpha-GDP complex. Also acts as an activator for G(q)-alpha (GNAQ) protein by enhancing the G(q)-coupled receptor-mediated ERK activation. The sequence is that of Chaperone Ric-8A from Mus musculus (Mouse).